The following is a 132-amino-acid chain: Phosphoribosyl-AMP cyclohydrolase (132 aa).

Residue D79 participates in Mg(2+) binding. Residue C80 participates in Zn(2+) binding. D81 and D83 together coordinate Mg(2+). Zn(2+) contacts are provided by C100 and C107.

It belongs to the PRA-CH family. In terms of assembly, homodimer. The cofactor is Mg(2+). Zn(2+) serves as cofactor.

The protein localises to the cytoplasm. The enzyme catalyses 1-(5-phospho-beta-D-ribosyl)-5'-AMP + H2O = 1-(5-phospho-beta-D-ribosyl)-5-[(5-phospho-beta-D-ribosylamino)methylideneamino]imidazole-4-carboxamide. The protein operates within amino-acid biosynthesis; L-histidine biosynthesis; L-histidine from 5-phospho-alpha-D-ribose 1-diphosphate: step 3/9. Catalyzes the hydrolysis of the adenine ring of phosphoribosyl-AMP. This is Phosphoribosyl-AMP cyclohydrolase from Delftia acidovorans (strain DSM 14801 / SPH-1).